The sequence spans 299 residues: MAAAEEGCGVGVEDDRELEELLESALDDFDKAKPSPEHAPTISAPDASGPQKRAPGDTAKDALFASQEKFFQELFDSELASQATAEFEKAMKELAEEEPHLVEQFQKLSEAAGRVGSDASSQQEFTSCLKETLSGLAKNATELQNSGMSEEELMKAMEGLGMDEGDGEASILPIMQSIMQNLLSKDVLYPSLKEITEKYPEWLQSHQDSTPPEQFEKYQQQHSVMVKICEQFEAETPTDSEATQRARFEAMLDLMQQLQALGHPPKELAGEMPPGLNFDLDALNLSGPPGANGEQCLIM.

The tract at residues 1–61 (MAAAEEGCGV…KRAPGDTAKD (61 aa)) is disordered. Alanine 2 carries the N-acetylalanine modification. The segment at 2-56 (AAAEEGCGVGVEDDRELEELLESALDDFDKAKPSPEHAPTISAPDASGPQKRAPG) is docking to the peroxisome membrane and binding to PEX3. The necessary for PEX19 function on peroxisome biogenesis stretch occupies residues 2-91 (AAAEEGCGVG…QATAEFEKAM (90 aa)). Residues 12–27 (VEDDRELEELLESALD) are compositionally biased toward acidic residues. 2 positions are modified to phosphoserine: serine 35 and serine 66. Threonine 236 is subject to Phosphothreonine. Position 296 is a cysteine methyl ester (cysteine 296). The S-farnesyl cysteine moiety is linked to residue cysteine 296. Positions 297-299 (LIM) are cleaved as a propeptide — removed in mature form.

It belongs to the peroxin-19 family. Interacts with a broad range of peroxisomal membrane proteins, including PEX3, PEX10, PEX11A, PEX11B, PEX12, PEX13, PEX14 and PEX16, PXMP2/PMP22, PXMP4/PMP24, SLC25A17/PMP34, ABCD1/ALDP, ABCD2/ALDRP, and ABCD3/PMP70. Also interacts with the tumor suppressor CDKN2A/p19ARF.

It is found in the cytoplasm. The protein resides in the peroxisome membrane. Necessary for early peroxisomal biogenesis. Acts both as a cytosolic chaperone and as an import receptor for peroxisomal membrane proteins (PMPs). Binds and stabilizes newly synthesized PMPs in the cytoplasm by interacting with their hydrophobic membrane-spanning domains, and targets them to the peroxisome membrane by binding to the integral membrane protein PEX3. Excludes CDKN2A from the nucleus and prevents its interaction with MDM2, which results in active degradation of TP53. The polypeptide is Peroxisomal biogenesis factor 19 (Pex19) (Mus musculus (Mouse)).